The sequence spans 513 residues: GMP synthase [glutamine-hydrolyzing] (513 aa).

Positions 9 to 198 (MILVLDFGSQ…VRRICDCTGE (190 aa)) constitute a Glutamine amidotransferase type-1 domain. The active-site Nucleophile is Cys86. Catalysis depends on residues His172 and Glu174. In terms of domain architecture, GMPS ATP-PPase spans 199-388 (WTMENFIDLE…LGIPEHLVWR (190 aa)). 226–232 (SGGVDSS) is an ATP binding site.

Homodimer.

It carries out the reaction XMP + L-glutamine + ATP + H2O = GMP + L-glutamate + AMP + diphosphate + 2 H(+). Its pathway is purine metabolism; GMP biosynthesis; GMP from XMP (L-Gln route): step 1/1. In terms of biological role, catalyzes the synthesis of GMP from XMP. The protein is GMP synthase [glutamine-hydrolyzing] of Staphylococcus carnosus (strain TM300).